The chain runs to 446 residues: D(1A) dopamine receptor (446 aa).

The Extracellular portion of the chain corresponds to 1–23 (MRTLNTSAMDGTGLVVERDFSVR). An N-linked (GlcNAc...) asparagine glycan is attached at Asn-5. Residues 24–49 (ILTACFLSLLILSTLLGNTLVCAAVI) traverse the membrane as a helical segment. The Cytoplasmic segment spans residues 50–60 (RFRHLRSKVTN). The helical transmembrane segment at 61-87 (FFVISLAVSDLLVAVLVMPWKAVAEIA) threads the bilayer. The Extracellular segment spans residues 88-96 (GFWPFGSFC). Cys-96 and Cys-186 are joined by a disulfide. The helical transmembrane segment at 97-119 (NIWVAFDIMCSTASILNLCVISV) threads the bilayer. The Cytoplasmic segment spans residues 120-138 (DRYWAISSPFRYERKMTPK). Residues 139–163 (AAFILISVAWTLSVLISFIPVQLSW) form a helical membrane-spanning segment. The Extracellular segment spans residues 164 to 192 (HKAKPTSPSDGNATSLAETIDNCDSSLSR). Asn-175 carries an N-linked (GlcNAc...) asparagine glycan. Residues 193 to 218 (TYAISSSVISFYIPVAIMIVTYTRIY) form a helical membrane-spanning segment. The Cytoplasmic portion of the chain corresponds to 219–272 (RIAQKQIRRIAALERAAVHAKNCQTTTGNGKPVECSQPESSFKMSFKRETKVLK). A helical membrane pass occupies residues 273–299 (TLSVIMGVFVCCWLPFFILNCILPFCG). Topologically, residues 300–312 (SGETQPFCIDSIT) are extracellular. Residues 313 to 337 (FDVFVWFGWANSSLNPIIYAFNADF) traverse the membrane as a helical segment. Over 338–446 (RKAFSTLLGC…PITQNGQHPT (109 aa)) the chain is Cytoplasmic. 2 S-palmitoyl cysteine lipidation sites follow: Cys-347 and Cys-351.

It belongs to the G-protein coupled receptor 1 family. As to quaternary structure, interacts with DNAJC14 via its C-terminus. Interacts with DRD2. Interacts with DORIP1.

The protein localises to the cell membrane. It localises to the endoplasmic reticulum membrane. It is found in the cell projection. The protein resides in the cilium membrane. Its subcellular location is the dendrite. The protein localises to the dendritic spine. Its function is as follows. Dopamine receptor whose activity is mediated by G proteins which activate adenylyl cyclase. The chain is D(1A) dopamine receptor (DRD1) from Macaca mulatta (Rhesus macaque).